The primary structure comprises 481 residues: Wax ester synthase/diacylglycerol acyltransferase 1 (481 aa).

At 1 to 185 (MKAEKVMERE…TTATKKPADS (185 aa)) the chain is on the cytoplasmic side. The active-site Proton acceptor is the His-147. Residues 186–206 (MAWWLFVGFWFMIRVTFTTIV) traverse the membrane as a helical segment. The Lumenal segment spans residues 207–481 (EFSKLMLTVC…QGEIFHKTEV (275 aa)).

The protein in the N-terminal section; belongs to the long-chain O-acyltransferase family. Expressed in flowers, siliques, top parts of stems, and leaves. Not found in roots, seeds and young seedlings.

The protein localises to the cell membrane. It localises to the endoplasmic reticulum membrane. The enzyme catalyses a long chain fatty alcohol + a fatty acyl-CoA = a wax ester + CoA. It catalyses the reaction an acyl-CoA + a 1,2-diacyl-sn-glycerol = a triacyl-sn-glycerol + CoA. Its pathway is glycerolipid metabolism; triacylglycerol biosynthesis. It functions in the pathway lipid metabolism. In terms of biological role, bifunctional wax ester synthase/diacylglycerol acyltransferase. Involved in cuticular wax biosynthesis. Required to reduce leaf water loss, especially during drought. The protein is Wax ester synthase/diacylglycerol acyltransferase 1 of Arabidopsis thaliana (Mouse-ear cress).